Here is an 880-residue protein sequence, read N- to C-terminus: Alanine--tRNA ligase (880 aa).

Zn(2+)-binding residues include His-566, His-570, Cys-668, and His-672.

This sequence belongs to the class-II aminoacyl-tRNA synthetase family. Zn(2+) is required as a cofactor.

It localises to the cytoplasm. The catalysed reaction is tRNA(Ala) + L-alanine + ATP = L-alanyl-tRNA(Ala) + AMP + diphosphate. Functionally, catalyzes the attachment of alanine to tRNA(Ala) in a two-step reaction: alanine is first activated by ATP to form Ala-AMP and then transferred to the acceptor end of tRNA(Ala). Also edits incorrectly charged Ser-tRNA(Ala) and Gly-tRNA(Ala) via its editing domain. The protein is Alanine--tRNA ligase of Trichormus variabilis (strain ATCC 29413 / PCC 7937) (Anabaena variabilis).